A 359-amino-acid polypeptide reads, in one-letter code: Guanine nucleotide-binding protein G(q) subunit alpha (359 aa).

Residues C9 and C10 are each lipidated (S-palmitoyl cysteine). Residues 38–359 form the G-alpha domain; sequence RELKLLLLGT…QLNLKEYNLV (322 aa). Positions 41–54 are G1 motif; sequence KLLLLGTGESGKST. GTP-binding residues include S50, G51, K52, S53, T54, S156, L180, R181, and R183. Residue S53 coordinates Mg(2+). Residues 178-186 form a G2 motif region; sequence DVLRVRVPT. Mg(2+) is bound at residue T186. The G3 motif stretch occupies residues 201 to 210; that stretch reads FRMVDVGGQR. Q209 is subject to 5-glutamyl histamine. Residues 270-277 form a G4 motif region; it reads ILFLNKKD. The GTP site is built by N274, K275, D277, and A331. Residues 329–334 are G5 motif; the sequence is TCATDT.

It belongs to the G-alpha family. G(q) subfamily. As to quaternary structure, g proteins are composed of 3 units; alpha, beta and gamma. The alpha chain contains the guanine nucleotide binding site. Interacts (GDP-bound form) with RIC8A (via C-terminus); promoting GNAQ folding and association with the plasma membrane. Binds NHERF1. Forms a complex with PECAM1 and BDKRB2. Interacts with GAS2L2. Post-translationally, palmitoylated by ZDHHC3 and ZDHHC7. Palmitoylation occurs in the Golgi and participates in the localization of GNAQ to the plasma membrane. In terms of processing, histaminylated at Gln-209 residues by TGM2.

It is found in the cell membrane. The protein resides in the golgi apparatus. Its subcellular location is the nucleus. The protein localises to the nucleus membrane. It catalyses the reaction GTP + H2O = GDP + phosphate + H(+). In terms of biological role, guanine nucleotide-binding proteins (G proteins) function as transducers downstream of G protein-coupled receptors (GPCRs) in numerous signaling cascades. The alpha chain contains the guanine nucleotide binding site and alternates between an active, GTP-bound state and an inactive, GDP-bound state. Signaling by an activated GPCR promotes GDP release and GTP binding. The alpha subunit has a low GTPase activity that converts bound GTP to GDP, thereby terminating the signal. Both GDP release and GTP hydrolysis are modulated by numerous regulatory proteins. Signaling is mediated via phospholipase C-beta-dependent inositol lipid hydrolysis for signal propagation: activates phospholipase C-beta: following GPCR activation, GNAQ activates PLC-beta (PLCB1, PLCB2, PLCB3 or PLCB4), leading to production of diacylglycerol (DAG) and inositol 1,4,5-trisphosphate (IP3). Required for platelet activation. Regulates B-cell selection and survival and is required to prevent B-cell-dependent autoimmunity. Regulates chemotaxis of BM-derived neutrophils and dendritic cells (in vitro). Transduces FFAR4 signaling in response to long-chain fatty acids (LCFAs). Together with GNA11, required for heart development. This chain is Guanine nucleotide-binding protein G(q) subunit alpha (GNAQ), found in Canis lupus familiaris (Dog).